A 428-amino-acid polypeptide reads, in one-letter code: MLEILADESVGGNSPTVIINRGAKKMQWPFIGCGGLGFSKTAHFTCFDSMTQLCEEDIPCIHLPPQHRSVYKMSTENKMRAVVFHSPYKVAVEERPIPKIQDSGDIVVKVTYTALCGSDLHTFRGIEPAGTGFVMGHEVTGEVVEVGSGVKSIQKGDMVVSAFTTSCGECFYCKQGFSSRCEKSVLFGCDHLDGAQAEYVRIPNADGTVMKAPEGVEEKYLVLMADIFPTGYFAASNAFKGYTPEQISEQTVVLIGCGPVGLCALINALEFKPKHLLAVDSIPSRLELARSLGAEPWNFQQDREGLDKRVKELTNGRGADAVIEVVGLSPALRTGFDLLRPWGTISSVGVHNGEIPWAGNDAYDKNLRIQMGRCPVRSVSPQALDVLKKNQHKLGFMADKIMPLSQAVEGYELFNAMKVQKVIFKAGE.

Positions 116, 137, 167, 170, 173, and 181 each coordinate Zn(2+). An N6-benzoyllysine modification is found at K393.

The protein belongs to the zinc-containing alcohol dehydrogenase family. Class-III subfamily. In terms of assembly, homodimer. The cofactor is Zn(2+). In terms of processing, benzoylation at lys-393 by gcnE leads to the activation od adhB.

It catalyses the reaction a primary alcohol + NAD(+) = an aldehyde + NADH + H(+). It carries out the reaction a secondary alcohol + NAD(+) = a ketone + NADH + H(+). Zinc-type alcohol dehydrogenase involved in development, secondary metabolism, pathogenicity, and stress response. Specifically controls the formation of sclerotia and the biosynthesis of aflatoxin. Contribute to seed colonization of A flavus on host maize seed. The protein is Zinc-type alcohol dehydrogenase B of Aspergillus flavus (strain ATCC 200026 / FGSC A1120 / IAM 13836 / NRRL 3357 / JCM 12722 / SRRC 167).